Consider the following 228-residue polypeptide: Large ribosomal subunit protein bL25 (228 aa).

Positions 1-24 are disordered; sequence MATVMELKATARPKSGKGAARAER.

This sequence belongs to the bacterial ribosomal protein bL25 family. CTC subfamily. Part of the 50S ribosomal subunit; part of the 5S rRNA/L5/L18/L25 subcomplex. Contacts the 5S rRNA. Binds to the 5S rRNA independently of L5 and L18.

In terms of biological role, this is one of the proteins that binds to the 5S RNA in the ribosome where it forms part of the central protuberance. This chain is Large ribosomal subunit protein bL25, found in Nitrobacter winogradskyi (strain ATCC 25391 / DSM 10237 / CIP 104748 / NCIMB 11846 / Nb-255).